Reading from the N-terminus, the 464-residue chain is Cystathionine beta-lyase, chloroplastic (464 aa).

Residues 1–55 (MTSSLSLHSSFVPSFADLSDRGLISKNSPTSVSISKVPTWEKKQISNRNSFKLNC) constitute a chloroplast transit peptide. Pyridoxal 5'-phosphate contacts are provided by tyrosine 127, arginine 129, glycine 157, methionine 158, serine 275, and threonine 277. N6-(pyridoxal phosphate)lysine is present on lysine 278.

This sequence belongs to the trans-sulfuration enzymes family. As to quaternary structure, forms homodimers. May form homotetramers from two homodimers. It depends on pyridoxal 5'-phosphate as a cofactor.

It localises to the plastid. Its subcellular location is the chloroplast. The enzyme catalyses L,L-cystathionine + H2O = L-homocysteine + pyruvate + NH4(+). It carries out the reaction an S-substituted L-cysteine + H2O = a thiol + pyruvate + NH4(+). It functions in the pathway amino-acid biosynthesis; L-methionine biosynthesis via de novo pathway; L-homocysteine from L-cystathionine: step 1/1. Functionally, catalyzes the penultimate step in the de novo biosynthesis of methionine. Its role in methionine metabolism may affect plant development in different organs, probably by modifying plant auxin transport. Its cysteine desulfhydrase activity may be involved in hydrogen sulfur production using L-cysteine as a substrate. The polypeptide is Cystathionine beta-lyase, chloroplastic (Arabidopsis thaliana (Mouse-ear cress)).